A 266-amino-acid polypeptide reads, in one-letter code: 3-methyl-2-oxobutanoate hydroxymethyltransferase 2 (266 aa).

The Mg(2+) site is built by Asp45 and Asp84. 3-methyl-2-oxobutanoate is bound by residues 45-46 (DS), Asp84, and Lys112. Residue Glu114 participates in Mg(2+) binding. Glu181 (proton acceptor) is an active-site residue.

It belongs to the PanB family. As to quaternary structure, homodecamer; pentamer of dimers. Mg(2+) serves as cofactor.

Its subcellular location is the cytoplasm. The enzyme catalyses 3-methyl-2-oxobutanoate + (6R)-5,10-methylene-5,6,7,8-tetrahydrofolate + H2O = 2-dehydropantoate + (6S)-5,6,7,8-tetrahydrofolate. The protein operates within cofactor biosynthesis; (R)-pantothenate biosynthesis; (R)-pantoate from 3-methyl-2-oxobutanoate: step 1/2. In terms of biological role, catalyzes the reversible reaction in which hydroxymethyl group from 5,10-methylenetetrahydrofolate is transferred onto alpha-ketoisovalerate to form ketopantoate. In Pseudomonas fluorescens (strain ATCC BAA-477 / NRRL B-23932 / Pf-5), this protein is 3-methyl-2-oxobutanoate hydroxymethyltransferase 2.